A 620-amino-acid chain; its full sequence is Mitochondrial Rho GTPase 2 (620 aa).

At 1–594 the chain is on the cytoplasmic side; the sequence is MKRDVRILLL…ELHTTSFWLR (594 aa). One can recognise a Miro 1 domain in the interval 2-168; sequence KRDVRILLLG…FYYAQKAVLH (167 aa). 4 residues coordinate GTP: Gly-16, Lys-17, Thr-18, and Ser-19. Thr-18 is a binding site for Mg(2+). Residues Pro-35 and Asp-57 each coordinate Mg(2+). Residue Ser-59 participates in GTP binding. Lys-96 participates in a covalent cross-link: Glycyl lysine isopeptide (Lys-Gly) (interchain with G-Cter in ubiquitin). Asn-118, Lys-119, Asp-121, Ala-149, and Lys-150 together coordinate GTP. Residue Lys-119 forms a Glycyl lysine isopeptide (Lys-Gly) (interchain with G-Cter in ubiquitin) linkage. Residue Lys-164 forms a Glycyl lysine isopeptide (Lys-Gly) (interchain with G-Cter in ubiquitin) linkage. 2 consecutive EF-hand domains span residues 184–219 and 304–339; these read ACAQALTRIFRLSDQDMDQALSDQELNAFQTCCFGH and HGYQFAQRMLEKHDQDRDGALSPAELESLFSVFPGP. Residues Asp-197, Asp-199, Asp-201, Glu-208, Asp-317, Asp-319, Asp-321, and Glu-328 each contribute to the Ca(2+) site. Positions 340–364 are disordered; that stretch reads PWGPQLPRHRPHRGRSAAPARVPLP. The Miro 2 domain maps to 415–578; sequence RNVLLCKVLG…FARLATMATF (164 aa). Gly-427, Gly-429, Lys-430, and Ser-431 together coordinate GTP. Residues Ser-431 and Glu-473 each contribute to the Mg(2+) site. Lys-527, Asp-529, and Cys-558 together coordinate GTP. The chain crosses the membrane as a helical; Anchor for type IV membrane protein span at residues 595–617; the sequence is VALGAVGAAVAAILSFSLYRVLV. Over 618-620 the chain is Mitochondrial intermembrane; the sequence is KSR.

It belongs to the mitochondrial Rho GTPase family. In terms of assembly, homodimer. Interacts with the kinesin-binding proteins TRAK1/OIP106 and TRAK2/GRIF1, forming a link between mitochondria and the trafficking apparatus of the microtubules. Interacts with ARMCX3. Found in a complex with KIF5B, OGT, RHOT1 and TRAK1. Ubiquitinated by PRKN in a PINK1-dependent manner, leading to its degradation.

It localises to the mitochondrion outer membrane. The catalysed reaction is GTP + H2O = GDP + phosphate + H(+). It catalyses the reaction ATP + H2O = ADP + phosphate + H(+). It carries out the reaction UTP + H2O = UDP + phosphate + H(+). Atypical mitochondrial nucleoside-triphosphatase (NTPase) involved in mitochondrial trafficking. Probably involved in control of anterograde transport of mitochondria and their subcellular distribution. Can hydrolyze GTP, ATP and UTP. In Sus scrofa (Pig), this protein is Mitochondrial Rho GTPase 2 (RHOT2).